The following is a 316-amino-acid chain: MAPKAKIVLVGSGMIGGVMATLIVQKNLGDVVLFDIVKNMPHGKALDTSHTNVMAYSNCKVSGSNTYDDLAGADVVIVTAGFTKAPGKSDKEWNRDDLLPLNNKIMIEIGGHIKKNCPNAFIIVVTNPVDVMVQLLHQHSGVPKNKIIGLGGVLDTSRLKYYISQKLNVCPRDVNAHIVGAHGNKMVLLKRYITVGGIPLQEFINNKLISDAELEAIFDRTVNTALEIVNLHASPYVAPAAAIIEMAESYLKDLKKVLICSTLLEGQYGHSDIFGGTPVVLGANGVEQVIELQLNSEEKAKFDEAIAETKRMKALA.

NAD(+) is bound by residues M14, 14 to 150, I15, D35, Y67, G81, F82, V125, N127, and L150; that span reads MIGG…IIGL. Residue R95 coordinates substrate. Substrate is bound by residues R158 and H182. H182 serves as the catalytic Proton acceptor.

It belongs to the LDH/MDH superfamily. LDH family. As to quaternary structure, homotetramer.

The enzyme catalyses (S)-lactate + NAD(+) = pyruvate + NADH + H(+). It functions in the pathway fermentation; pyruvate fermentation to lactate; (S)-lactate from pyruvate: step 1/1. In Plasmodium falciparum (isolate CDC / Honduras), this protein is L-lactate dehydrogenase.